Consider the following 398-residue polypeptide: LL-diaminopimelate aminotransferase (398 aa).

Substrate-binding residues include Tyr-14 and Gly-41. Pyridoxal 5'-phosphate-binding positions include Tyr-71, 104-105, Tyr-128, Asn-174, Tyr-205, and 233-235; these read AK and SFS. Substrate contacts are provided by Lys-105, Tyr-128, and Asn-174. Lys-236 carries the N6-(pyridoxal phosphate)lysine modification. 2 residues coordinate pyridoxal 5'-phosphate: Arg-244 and Asn-275. 2 residues coordinate substrate: Asn-275 and Arg-368.

The protein belongs to the class-I pyridoxal-phosphate-dependent aminotransferase family. LL-diaminopimelate aminotransferase subfamily. Homodimer. It depends on pyridoxal 5'-phosphate as a cofactor.

The catalysed reaction is (2S,6S)-2,6-diaminopimelate + 2-oxoglutarate = (S)-2,3,4,5-tetrahydrodipicolinate + L-glutamate + H2O + H(+). Its pathway is amino-acid biosynthesis; L-lysine biosynthesis via DAP pathway; LL-2,6-diaminopimelate from (S)-tetrahydrodipicolinate (aminotransferase route): step 1/1. Involved in the synthesis of meso-diaminopimelate (m-DAP or DL-DAP), required for both lysine and peptidoglycan biosynthesis. Catalyzes the direct conversion of tetrahydrodipicolinate to LL-diaminopimelate. This Chlamydia felis (strain Fe/C-56) (Chlamydophila felis) protein is LL-diaminopimelate aminotransferase.